The following is a 198-amino-acid chain: Recombination protein RecR (198 aa).

The C4-type zinc finger occupies 57-72 (CAMCNTFTEHEVCETC). The 96-residue stretch at 80 to 175 (ALLCVVETPG…KVSRLARGVP (96 aa)) folds into the Toprim domain.

The protein belongs to the RecR family.

May play a role in DNA repair. It seems to be involved in an RecBC-independent recombinational process of DNA repair. It may act with RecF and RecO. In Janthinobacterium sp. (strain Marseille) (Minibacterium massiliensis), this protein is Recombination protein RecR.